The sequence spans 582 residues: Inactive metallocarboxypeptidase ECM14 (582 aa).

A signal peptide spans 1 to 20 (MHILQVITGATLVSVPFVSA). The propeptide occupies 21-172 (IPSSTSEFLP…QAVYESYPQP (152 aa)). Residues 200–522 (DYQPLSVIIP…NAVLVFGQFL (323 aa)) enclose the Peptidase M14 domain. Residues His-265 and Glu-268 each contribute to the Zn(2+) site. Residues 265 to 268 (HARE), Arg-323, and 340 to 341 (DR) contribute to the substrate site. A disulfide bridge connects residues Cys-334 and Cys-357. N-linked (GlcNAc...) asparagine glycosylation is found at Asn-381 and Asn-387. His-397 is a binding site for Zn(2+). 398–399 (SY) is a binding site for substrate. Residues 561–571 (SNQLEDDDNEN) show a composition bias toward acidic residues. Positions 561 to 582 (SNQLEDDDNENDTLLGFRTQKV) are disordered. Asn-571 is a glycosylation site (N-linked (GlcNAc...) asparagine).

Belongs to the peptidase M14 family. The cofactor is Zn(2+).

The protein localises to the vacuole. It is found in the secreted. Inactive carboxypeptidase that may play a role in cell wall organization and biogenesis. This chain is Inactive metallocarboxypeptidase ECM14 (ECM14), found in Coccidioides posadasii (strain RMSCC 757 / Silveira) (Valley fever fungus).